The sequence spans 394 residues: Arogenate dehydratase 2 (394 aa).

The tract at residues methionine 1–leucine 24 is disordered. The transit peptide at methionine 1–cysteine 47 directs the protein to the chloroplast. The region spanning arginine 108–arginine 283 is the Prephenate dehydratase domain. Residues serine 297–proline 388 form the ACT domain.

In terms of tissue distribution, expressed at low levels in petals (corollas and tubes), stems, leaves, pistils, stamens, ovaries and sepals.

It localises to the plastid. The protein resides in the chloroplast stroma. The enzyme catalyses prephenate + H(+) = 3-phenylpyruvate + CO2 + H2O. It catalyses the reaction L-arogenate + H(+) = L-phenylalanine + CO2 + H2O. It functions in the pathway amino-acid biosynthesis; L-phenylalanine biosynthesis; L-phenylalanine from L-arogenate: step 1/1. In terms of biological role, converts the prephenate and L-arogenate produced from the shikimate-chorismate pathway into 3-phenylpyruvate and phenylalanine (Phe), respectively. Involved in floral volatile benzenoids and phenylpropanoids (FVBP) production. In Petunia hybrida (Petunia), this protein is Arogenate dehydratase 2.